The following is a 283-amino-acid chain: Thymidylate synthase (283 aa).

DUMP is bound at residue Arg-22. Residue Cys-160 is the Nucleophile of the active site. Residues 180-183, Asn-191, and 221-223 contribute to the dUMP site; these read RSCD and HIY. A (6R)-5,10-methylene-5,6,7,8-tetrahydrofolate-binding site is contributed by Asp-183. Ser-282 contacts (6R)-5,10-methylene-5,6,7,8-tetrahydrofolate.

It belongs to the thymidylate synthase family. Bacterial-type ThyA subfamily. In terms of assembly, homodimer.

The protein localises to the cytoplasm. It carries out the reaction dUMP + (6R)-5,10-methylene-5,6,7,8-tetrahydrofolate = 7,8-dihydrofolate + dTMP. Its pathway is pyrimidine metabolism; dTTP biosynthesis. Its function is as follows. Catalyzes the reductive methylation of 2'-deoxyuridine-5'-monophosphate (dUMP) to 2'-deoxythymidine-5'-monophosphate (dTMP) while utilizing 5,10-methylenetetrahydrofolate (mTHF) as the methyl donor and reductant in the reaction, yielding dihydrofolate (DHF) as a by-product. This enzymatic reaction provides an intracellular de novo source of dTMP, an essential precursor for DNA biosynthesis. This Mannheimia succiniciproducens (strain KCTC 0769BP / MBEL55E) protein is Thymidylate synthase.